The chain runs to 531 residues: GTPase Obg (531 aa).

One can recognise an Obg domain in the interval 2–159; sequence ASFVDRVIVH…QEVELELKSI (158 aa). The OBG-type G domain maps to 160-341; it reads ADIALVGFPS…LSFAMAALVS (182 aa). GTP is bound by residues 166-173, 191-195, 212-215, 293-296, and 322-324; these read GFPSAGKS, FTTLV, DVPG, NKVD, and STA. 2 residues coordinate Mg(2+): S173 and T193. Residues 346–365 are disordered; sequence QEEQREQQRQTVPVLQPEPV. The OCT domain maps to 368 to 453; it reads RRGRDRREFV…ENGVVFDWEP (86 aa). Positions 459–531 are disordered; it reads AELLGGPRGS…TSETKETNEK (73 aa). Basic and acidic residues-rich tracts occupy residues 468 to 507 and 514 to 531; these read SDLR…ERRA and VDAR…TNEK.

It belongs to the TRAFAC class OBG-HflX-like GTPase superfamily. OBG GTPase family. As to quaternary structure, monomer. Mg(2+) is required as a cofactor.

It localises to the cytoplasm. Its function is as follows. An essential GTPase which binds GTP, GDP and possibly (p)ppGpp with moderate affinity, with high nucleotide exchange rates and a fairly low GTP hydrolysis rate. Plays a role in control of the cell cycle, stress response, ribosome biogenesis and in those bacteria that undergo differentiation, in morphogenesis control. This is GTPase Obg from Kocuria rhizophila (strain ATCC 9341 / DSM 348 / NBRC 103217 / DC2201).